We begin with the raw amino-acid sequence, 788 residues long: Phosphoribosylformylglycinamidine synthase subunit PurL (788 aa).

H50 is a catalytic residue. Positions 53 and 92 each coordinate ATP. E94 contributes to the Mg(2+) binding site. Residues 95 to 98 (SHNH) and R117 each bind substrate. The Proton acceptor role is filled by H96. Residue D118 coordinates Mg(2+). Q241 is a substrate binding site. D269 serves as a coordination point for Mg(2+). Residue 313-315 (ESQ) coordinates substrate. The ATP site is built by D524 and G561. N562 serves as a coordination point for Mg(2+). Residue S564 participates in substrate binding.

This sequence belongs to the FGAMS family. As to quaternary structure, monomer. Part of the FGAM synthase complex composed of 1 PurL, 1 PurQ and 2 PurS subunits.

Its subcellular location is the cytoplasm. The enzyme catalyses N(2)-formyl-N(1)-(5-phospho-beta-D-ribosyl)glycinamide + L-glutamine + ATP + H2O = 2-formamido-N(1)-(5-O-phospho-beta-D-ribosyl)acetamidine + L-glutamate + ADP + phosphate + H(+). The protein operates within purine metabolism; IMP biosynthesis via de novo pathway; 5-amino-1-(5-phospho-D-ribosyl)imidazole from N(2)-formyl-N(1)-(5-phospho-D-ribosyl)glycinamide: step 1/2. Part of the phosphoribosylformylglycinamidine synthase complex involved in the purines biosynthetic pathway. Catalyzes the ATP-dependent conversion of formylglycinamide ribonucleotide (FGAR) and glutamine to yield formylglycinamidine ribonucleotide (FGAM) and glutamate. The FGAM synthase complex is composed of three subunits. PurQ produces an ammonia molecule by converting glutamine to glutamate. PurL transfers the ammonia molecule to FGAR to form FGAM in an ATP-dependent manner. PurS interacts with PurQ and PurL and is thought to assist in the transfer of the ammonia molecule from PurQ to PurL. This Nostoc punctiforme (strain ATCC 29133 / PCC 73102) protein is Phosphoribosylformylglycinamidine synthase subunit PurL.